The primary structure comprises 233 residues: ATP-dependent Clp protease proteolytic subunit 1 (233 aa).

Residue S136 is the Nucleophile of the active site. The active site involves H161.

This sequence belongs to the peptidase S14 family. As to quaternary structure, fourteen ClpP subunits assemble into 2 heptameric rings which stack back to back to give a disk-like structure with a central cavity, resembling the structure of eukaryotic proteasomes.

Its subcellular location is the cytoplasm. The enzyme catalyses Hydrolysis of proteins to small peptides in the presence of ATP and magnesium. alpha-casein is the usual test substrate. In the absence of ATP, only oligopeptides shorter than five residues are hydrolyzed (such as succinyl-Leu-Tyr-|-NHMec, and Leu-Tyr-Leu-|-Tyr-Trp, in which cleavage of the -Tyr-|-Leu- and -Tyr-|-Trp bonds also occurs).. Cleaves peptides in various proteins in a process that requires ATP hydrolysis. Has a chymotrypsin-like activity. Plays a major role in the degradation of misfolded proteins. The protein is ATP-dependent Clp protease proteolytic subunit 1 of Bifidobacterium longum (strain NCC 2705).